Here is a 137-residue protein sequence, read N- to C-terminus: MPPKAADKKPASKAPATASKAPEKKDAGKKTAASGDKKKRTKTRKETYSSYIYKVLKQVHPDTGISNRAMSILNSFVNDIFERVATEASKLAAYNKKSTISSREIQTSVRLILPGELAKHAVSEGTKAVTKYSSSTK.

Residues 1-10 (MPPKAADKKP) show a composition bias toward basic and acidic residues. A disordered region spans residues 1-45 (MPPKAADKKPASKAPATASKAPEKKDAGKKTAASGDKKKRTKTRK). An N6-acetyllysine; alternate mark is found at lysine 8 and lysine 9. Residues lysine 8 and lysine 9 each participate in a glycyl lysine isopeptide (Lys-Gly) (interchain with G-Cter in SUMO); alternate cross-link. At serine 12 the chain carries Phosphoserine. Lysine 13 carries the N6-acetyllysine modification. Lysine 24 is modified (N6-acetyllysine; alternate). Residue lysine 24 forms a Glycyl lysine isopeptide (Lys-Gly) (interchain with G-Cter in SUMO); alternate linkage. A Glycyl lysine isopeptide (Lys-Gly) (interchain with G-Cter in SUMO) cross-link involves residue lysine 25. A Glycyl lysine isopeptide (Lys-Gly) (interchain with G-Cter in ubiquitin) cross-link involves residue lysine 131.

Belongs to the histone H2B family. In terms of assembly, the nucleosome is a histone octamer containing two molecules each of H2A, H2B, H3 and H4 assembled in one H3-H4 heterotetramer and two H2A-H2B heterodimers. The octamer wraps approximately 147 bp of DNA. In terms of processing, monoubiquitinated by the UBC2-BRE1 complex to form H2BK123ub1. H2BK123ub1 gives a specific tag for epigenetic transcriptional activation and is also prerequisite for H3K4me and H3K79me formation. H2BK123ub1 also modulates the formation of double-strand breaks during meiosis and is a prerequisite for DNA-damage checkpoint activation. Phosphorylated by STE20 to form H2BS10ph during progression through meiotic prophase. May be correlated with chromosome condensation. Post-translationally, acetylated by GCN5 to form H2BK11ac and H2BK16ac. H2BK16ac can also be formed by ESA1. Acetylation of N-terminal lysines and particularly formation of H2BK11acK16ac has a positive effect on transcription. In terms of processing, sumoylation to form H2BK6su or H2BK7su, and probably also H2BK16su or H2BK17su, occurs preferentially near the telomeres and represses gene transcription.

Its subcellular location is the nucleus. It localises to the chromosome. Functionally, core component of nucleosome. Nucleosomes wrap and compact DNA into chromatin, limiting DNA accessibility to the cellular machineries which require DNA as a template. Histones thereby play a central role in transcription regulation, DNA repair, DNA replication and chromosomal stability. DNA accessibility is regulated via a complex set of post-translational modifications of histones, also called histone code, and nucleosome remodeling. The sequence is that of Histone H2B (HTB1) from Pyricularia oryzae (strain Y34) (Rice blast fungus).